The sequence spans 337 residues: P2Y purinoceptor 14 (337 aa).

The Extracellular segment spans residues 1 to 28; the sequence is MNATSVPPAEGSCPSNALITKQIIPMLY. An N-linked (GlcNAc...) asparagine glycan is attached at Asn2. A helical membrane pass occupies residues 29-49; that stretch reads FVVFVAGILLNGMSGWVFFYV. At 50–54 the chain is on the cytoplasmic side; that stretch reads PSSKS. A helical membrane pass occupies residues 55–75; it reads FIVYLKNIVIADFLMSLTFPF. The Extracellular segment spans residues 76 to 95; that stretch reads KILGDLGLGLWQVKVFVCRV. An intrachain disulfide couples Cys93 to Cys171. The chain crosses the membrane as a helical span at residues 96–116; it reads SAVLFYINMYVSIVFFGLIGF. The Cytoplasmic segment spans residues 117-138; the sequence is DRYYKIVKPLLTSFIQSISYSK. The chain crosses the membrane as a helical span at residues 139–159; the sequence is LLSVLVWSLTLLIALPNMILT. Topologically, residues 160–187 are extracellular; it reads NRNVTEATRVKCMDLKSDLGLKWHKASS. Asn162 carries an N-linked (GlcNAc...) asparagine glycan. Residues 188–208 form a helical membrane-spanning segment; the sequence is YIFVGIFWIVFLSLIIFYTAI. Topologically, residues 209–233 are cytoplasmic; that stretch reads TKKIFKSHFKSRKNSVSVKKKSSRN. Residues 234-254 form a helical membrane-spanning segment; that stretch reads IFSIMFVFFICFVPYHIARIP. Residues 255–277 lie on the Extracellular side of the membrane; that stretch reads YTQSQTEAHYSCQSKQILFYVKE. A helical transmembrane segment spans residues 278–298; the sequence is FSLLLSAANVCLDPIIYFFLC. Residues 299–337 lie on the Cytoplasmic side of the membrane; sequence QPFREVLCKKLHIQLKTQHDSETSKIKRENIIQESTDTL.

The protein belongs to the G-protein coupled receptor 1 family.

The protein resides in the cell membrane. Its function is as follows. Receptor for UDP-glucose and other UDP-sugar coupled to G-proteins. Not activated by ATP, ADP, UTP or ATP. The chain is P2Y purinoceptor 14 (P2RY14) from Bos taurus (Bovine).